The primary structure comprises 548 residues: Alpha-1,3-mannosyl-glycoprotein 4-beta-N-acetylglucosaminyltransferase B (548 aa).

Residues 1–7 lie on the Cytoplasmic side of the membrane; the sequence is MRLRNGT. The helical; Signal-anchor for type II membrane protein transmembrane segment at 8 to 28 threads the bilayer; that stretch reads FLTLLLFCLCAFLSLSWYAAL. Residues 29-548 lie on the Lumenal side of the membrane; that stretch reads SGQKGDVVDI…LSEIFLKKAD (520 aa). The stretch at 36 to 83 forms a coiled coil; the sequence is VDIYQREFLALRDRLHAAEQESLKRSKELNLVLEEIKRAVSERQALRD. Asparagine 87 and asparagine 103 each carry an N-linked (GlcNAc...) asparagine glycan.

Belongs to the glycosyltransferase 54 family. As to quaternary structure, interacts with SLC35A3. Requires a divalent metal cation as cofactor. N-glycosylated.

The protein localises to the golgi apparatus membrane. The enzyme catalyses N(4)-{beta-D-GlcNAc-(1-&gt;2)-alpha-D-Man-(1-&gt;3)-[beta-D-GlcNAc-(1-&gt;2)-alpha-D-Man-(1-&gt;6)]-beta-D-Man-(1-&gt;4)-beta-D-GlcNAc-(1-&gt;4)-beta-D-GlcNAc}-L-asparaginyl-[protein] + UDP-N-acetyl-alpha-D-glucosamine = N(4)-{beta-D-GlcNAc-(1-&gt;2)-[beta-D-GlcNAc-(1-&gt;4)]-alpha-D-Man-(1-&gt;3)-[beta-D-GlcNAc-(1-&gt;2)-alpha-D-Man-(1-&gt;6)]-beta-D-Man-(1-&gt;4)-beta-D-GlcNAc-(1-&gt;4)-beta-D-GlcNAc}-L-asparaginyl-[protein] + UDP + H(+). The catalysed reaction is an N(4)-{beta-D-GlcNAc-(1-&gt;2)-alpha-D-Man-(1-&gt;3)-[alpha-D-Man-(1-&gt;6)]-beta-D-Man-(1-&gt;4)-beta-D-GlcNAc-(1-&gt;4)-beta-D-GlcNAc}-L-asparaginyl-[protein] + UDP-N-acetyl-alpha-D-glucosamine = an N(4)-{beta-D-GlcNAc-(1-&gt;2)-[beta-D-GlcNAc-(1-&gt;4)]-alpha-D-Man-(1-&gt;3)-[alpha-D-Man-(1-&gt;6)]-beta-D-Man-(1-&gt;4)-beta-D-GlcNAc-(1-&gt;4)-beta-D-GlcNAc}-L-asparaginyl-[protein] + UDP + H(+). It catalyses the reaction an N(4)-{beta-D-GlcNAc-(1-&gt;2)-alpha-D-Man-(1-&gt;3)-[beta-D-GlcNAc-(1-&gt;2)-[beta-D-GlcNAc-(1-&gt;6)]-alpha-D-Man-(1-&gt;6)]-beta-D-Man-(1-&gt;4)-beta-D-GlcNAc-(1-&gt;4)-beta-D-GlcNAc}-L-asparaginyl-[protein] + UDP-N-acetyl-alpha-D-glucosamine = an N(4)-{beta-D-GlcNAc-(1-&gt;2)-[beta-D-GlcNAc-(1-&gt;4)]-alpha-D-Man-(1-&gt;3)-[beta-D-GlcNAc-(1-&gt;2)-[beta-D-GlcNAc-(1-&gt;6)]-alpha-D-Man-(1-&gt;6)]-beta-D-Man-(1-&gt;4)-beta-D-GlcNAc-(1-&gt;4)-beta-D-GlcNAc}-L-asparaginyl-[protein] + UDP + H(+). It carries out the reaction an N(4)-{beta-D-GlcNAc-(1-&gt;2)-alpha-D-Man-(1-&gt;3)-[beta-D-GlcNAc-(1-&gt;2)-alpha-D-Man-(1-&gt;6)]-beta-D-Man-(1-&gt;4)-beta-D-GlcNAc-(1-&gt;4)-[alpha-L-Fuc-(1-&gt;6)]-beta-D-GlcNAc}-L-asparaginyl-[protein] + UDP-N-acetyl-alpha-D-glucosamine = N(4)-{beta-D-GlcNAc-(1-&gt;2)-[beta-D-GlcNAc-(1-&gt;4)]-alpha-D-Man-(1-&gt;3)-[beta-D-GlcNAc-(1-&gt;2)-alpha-D-Man-(1-&gt;6)]-beta-D-Man-(1-&gt;4)-beta-D-GlcNAc-(1-&gt;4)-[alpha-L-Fuc-(1-&gt;6)]-beta-D-GlcNAc}-asparaginyl-[protein] + UDP + H(+). The enzyme catalyses an N(4)-{beta-D-GlcNAc-(1-&gt;2)-alpha-D-Man-(1-&gt;3)-[beta-D-Gal-(1-&gt;4)-beta-D-GlcNAc-(1-&gt;2)-alpha-D-Man-(1-&gt;6)]-beta-D-Man-(1-&gt;4)-beta-D-GlcNAc-(1-&gt;4)-beta-D-GlcNAc}-L-asparaginyl-[protein] + UDP-N-acetyl-alpha-D-glucosamine = an N(4)-{beta-D-GlcNAc-(1-&gt;2)-[beta-D-GlcNAc-(1-&gt;4)]-alpha-D-Man-(1-&gt;3)-[beta-D-Gal-(1-&gt;4)-beta-D-GlcNAc-(1-&gt;2)-alpha-D-Man-(1-&gt;6)]-beta-D-Man-(1-&gt;4)-beta-D-GlcNAc-(1-&gt;4)-beta-D-GlcNAc}-L-asparaginyl-[protein] + UDP + H(+). The catalysed reaction is N(4)-{beta-D-GlcNAc-(1-&gt;2)-alpha-D-Man-(1-&gt;3)-[alpha-D-Man-(1-&gt;3)-{alpha-D-Man-(1-&gt;6)}-alpha-D-Man-(1-&gt;6)]-beta-D-Man-(1-&gt;4)-beta-D-GlcNAc-(1-&gt;4)-beta-D-GlcNAc}-asparaginyl-[protein] + UDP-N-acetyl-alpha-D-glucosamine = N(4)-{beta-D-GlcNAc-(1-&gt;2)-[beta-D-GlcNAc-(1-&gt;4)]-alpha-D-Man-(1-&gt;3)-[alpha-D-Man-(1-&gt;3)-{alpha-D-Man-(1-&gt;6)}-alpha-D-Man-(1-&gt;6)]-beta-D-Man-(1-&gt;4)-beta-D-GlcNAc-(1-&gt;4)-beta-D-GlcNAc}-asparaginyl-[protein] + UDP + H(+). It catalyses the reaction N(4)-{beta-D-GlcNAc-(1-&gt;2)-alpha-D-Man-(1-&gt;3)-beta-D-Man-(1-&gt;4)-beta-D-GlcNAc-(1-&gt;4)-beta-D-GlcNAc}-asparaginyl-[protein] + UDP-N-acetyl-alpha-D-glucosamine = N(4)-{beta-D-GlcNAc-(1-&gt;2)-[beta-D-GlcNAc-(1-&gt;4)]-alpha-D-Man-(1-&gt;3)-beta-D-Man-(1-&gt;4)-beta-D-GlcNAc-(1-&gt;4)-beta-D-GlcNAc}-asparaginyl-[protein] + UDP + H(+). It participates in protein modification; protein glycosylation. Functionally, glycosyltransferase that catalyzes the transfer of GlcNAc from UDP-GlcNAc to the GlcNAcbeta1-2Manalpha1-3 arm of the core structure of N-linked glycans through a beta1-4 linkage and participates in the production of tri- and tetra-antennary N-linked sugar chains. Prefers complex-type N-glycans over hybrid-types. Has lower affinities for donors or acceptors than MGAT4A, suggesting that, under physiological conditions, it is not the main contributor in N-glycan biosynthesis. The polypeptide is Alpha-1,3-mannosyl-glycoprotein 4-beta-N-acetylglucosaminyltransferase B (Mus musculus (Mouse)).